Reading from the N-terminus, the 279-residue chain is Nucleotide-binding protein THA_1518 (279 aa).

9–16 contributes to the ATP binding site; sequence GLSGAGKS. Residue 57-60 participates in GTP binding; it reads DARS.

Belongs to the RapZ-like family.

Displays ATPase and GTPase activities. This is Nucleotide-binding protein THA_1518 from Thermosipho africanus (strain TCF52B).